The sequence spans 361 residues: Putative agmatine deiminase (361 aa).

The Amidino-cysteine intermediate role is filled by C354.

Belongs to the agmatine deiminase family.

It carries out the reaction agmatine + H2O = N-carbamoylputrescine + NH4(+). This is Putative agmatine deiminase from Streptococcus pneumoniae (strain ATCC BAA-255 / R6).